The chain runs to 69 residues: Large ribosomal subunit protein bL31 (69 aa).

Residues Cys17, Cys19, Cys37, and Cys40 each coordinate Zn(2+).

The protein belongs to the bacterial ribosomal protein bL31 family. Type A subfamily. Part of the 50S ribosomal subunit. Zn(2+) is required as a cofactor.

Its function is as follows. Binds the 23S rRNA. This chain is Large ribosomal subunit protein bL31, found in Clostridium novyi (strain NT).